The following is a 115-amino-acid chain: Large ribosomal subunit protein bL20c (115 aa).

It belongs to the bacterial ribosomal protein bL20 family.

It is found in the plastid. The protein localises to the chloroplast. Binds directly to 23S ribosomal RNA and is necessary for the in vitro assembly process of the 50S ribosomal subunit. It is not involved in the protein synthesizing functions of that subunit. The polypeptide is Large ribosomal subunit protein bL20c (Nymphaea alba (White water-lily)).